We begin with the raw amino-acid sequence, 147 residues long: UPF0178 protein Patl_1318 (147 aa).

This sequence belongs to the UPF0178 family.

The sequence is that of UPF0178 protein Patl_1318 from Pseudoalteromonas atlantica (strain T6c / ATCC BAA-1087).